A 236-amino-acid chain; its full sequence is Thiamine-phosphate synthase (236 aa).

4-amino-2-methyl-5-(diphosphooxymethyl)pyrimidine contacts are provided by residues 57-61 (QLRDK) and N89. Mg(2+) is bound by residues D90 and D109. Residue S128 coordinates 4-amino-2-methyl-5-(diphosphooxymethyl)pyrimidine. 154–156 (TPS) provides a ligand contact to 2-[(2R,5Z)-2-carboxy-4-methylthiazol-5(2H)-ylidene]ethyl phosphate. K157 contacts 4-amino-2-methyl-5-(diphosphooxymethyl)pyrimidine. 2-[(2R,5Z)-2-carboxy-4-methylthiazol-5(2H)-ylidene]ethyl phosphate-binding positions include G185 and 205 to 206 (IS).

It belongs to the thiamine-phosphate synthase family. Mg(2+) serves as cofactor.

The catalysed reaction is 2-[(2R,5Z)-2-carboxy-4-methylthiazol-5(2H)-ylidene]ethyl phosphate + 4-amino-2-methyl-5-(diphosphooxymethyl)pyrimidine + 2 H(+) = thiamine phosphate + CO2 + diphosphate. It catalyses the reaction 2-(2-carboxy-4-methylthiazol-5-yl)ethyl phosphate + 4-amino-2-methyl-5-(diphosphooxymethyl)pyrimidine + 2 H(+) = thiamine phosphate + CO2 + diphosphate. It carries out the reaction 4-methyl-5-(2-phosphooxyethyl)-thiazole + 4-amino-2-methyl-5-(diphosphooxymethyl)pyrimidine + H(+) = thiamine phosphate + diphosphate. Its pathway is cofactor biosynthesis; thiamine diphosphate biosynthesis; thiamine phosphate from 4-amino-2-methyl-5-diphosphomethylpyrimidine and 4-methyl-5-(2-phosphoethyl)-thiazole: step 1/1. Functionally, condenses 4-methyl-5-(beta-hydroxyethyl)thiazole monophosphate (THZ-P) and 2-methyl-4-amino-5-hydroxymethyl pyrimidine pyrophosphate (HMP-PP) to form thiamine monophosphate (TMP). This Roseiflexus sp. (strain RS-1) protein is Thiamine-phosphate synthase.